Here is a 183-residue protein sequence, read N- to C-terminus: Thioredoxin/glutathione peroxidase BtuE (183 aa).

The active site involves Cys-37.

The protein belongs to the glutathione peroxidase family. BtuE subfamily.

It is found in the periplasm. It catalyses the reaction 2 glutathione + H2O2 = glutathione disulfide + 2 H2O. The catalysed reaction is a hydroperoxide + [thioredoxin]-dithiol = an alcohol + [thioredoxin]-disulfide + H2O. In terms of biological role, non-specific peroxidase that can use thioredoxin or glutathione as a reducing agent. In vitro, utilizes preferentially thioredoxin A to decompose hydrogen peroxide as well as cumene-, tert-butyl-, and linoleic acid hydroperoxides, suggesting that it may have one or more organic hydroperoxide as its physiological substrate. The polypeptide is Thioredoxin/glutathione peroxidase BtuE (Escherichia coli (strain K12)).